A 240-amino-acid chain; its full sequence is Uridylate kinase (240 aa).

12-15 (KLSG) contacts ATP. A UMP-binding site is contributed by Gly54. ATP contacts are provided by Gly55 and Arg59. UMP is bound by residues Asp74 and 135–142 (TGNPFFTT). Thr162, Tyr168, and Asp171 together coordinate ATP.

It belongs to the UMP kinase family. As to quaternary structure, homohexamer.

It is found in the cytoplasm. The catalysed reaction is UMP + ATP = UDP + ADP. The protein operates within pyrimidine metabolism; CTP biosynthesis via de novo pathway; UDP from UMP (UMPK route): step 1/1. Inhibited by UTP. Functionally, catalyzes the reversible phosphorylation of UMP to UDP. In Xanthomonas oryzae pv. oryzae (strain KACC10331 / KXO85), this protein is Uridylate kinase.